Reading from the N-terminus, the 130-residue chain is Nascent polypeptide-associated complex protein (130 aa).

The NAC-A/B domain maps to Pro8–Lys75.

It belongs to the NAC-alpha family. As to quaternary structure, homodimer. Interacts with the ribosome. Binds ribosomal RNA.

Contacts the emerging nascent chain on the ribosome. The protein is Nascent polypeptide-associated complex protein of Methanococcus aeolicus (strain ATCC BAA-1280 / DSM 17508 / OCM 812 / Nankai-3).